Reading from the N-terminus, the 710-residue chain is Probable inactive DNA (cytosine-5)-methyltransferase DRM3 (710 aa).

A disordered region spans residues 1–21 (MADMRRRNGSGGSSNHERNEQ). In terms of domain architecture, UBA 1 spans 52–92 (SGSNVKSLLIEMGFCPTLVQKAIDENGQDDFELLLEILTKS). Residues 167–184 (ESEDSLDGAEINEEDEDV) show a composition bias toward acidic residues. Residues 167-192 (ESEDSLDGAEINEEDEDVTPVTARGP) are disordered. The region spanning 198–242 (QLFETMDKTLRLLEMGFSNDEISMAIEKIGTKGQISVLAESIVTG) is the UBA 2 domain. Residues 282–360 (AQKEDGGGGS…MGDSSSFMET (79 aa)) are disordered. Positions 339 to 350 (YDDRGKRLRPED) are enriched in basic and acidic residues. The region spanning 379-710 (QPRLSQSLGP…RVTKRVRDMM (332 aa)) is the SAM-dependent MTase DRM-type domain.

The protein belongs to the class I-like SAM-binding methyltransferase superfamily. DRM-methyltransferase family. In terms of assembly, interacts with Pol V.

It is found in the nucleus. Its function is as follows. Catalytically inactive DNA methyltransferase that acts as regulatory factor for DRM2-mediated DNA methylation. Required for maintenance of non-CpG DNA methylation. Required for normal establishment and maintenance of RNA-directed DNA methylation (RdDM) and accumulation of specific repeat-associated small interfering RNAs (siRNAs). Required for nucleolus organizer region (NOR) nuclear organization during interphase. Acts downstream of the production of siRNAs. May promote RNA polymerase V (Pol V) transcriptional elongation or assist in the stabilization of Pol V transcripts. The protein is Probable inactive DNA (cytosine-5)-methyltransferase DRM3 of Arabidopsis thaliana (Mouse-ear cress).